The chain runs to 202 residues: Probable GTP-binding protein EngB (202 aa).

Residues 22-197 enclose the EngB-type G domain; the sequence is VFPEYAFIGR…LDYIENISKE (176 aa). GTP contacts are provided by residues 30–37, 57–61, 75–78, 142–145, and 173–178; these read GRSNVGKS, GKTML, DLPG, TKAD, and YFISSS. Mg(2+)-binding residues include Ser37 and Thr59.

This sequence belongs to the TRAFAC class TrmE-Era-EngA-EngB-Septin-like GTPase superfamily. EngB GTPase family. Mg(2+) is required as a cofactor.

In terms of biological role, necessary for normal cell division and for the maintenance of normal septation. This is Probable GTP-binding protein EngB from Bacteroides thetaiotaomicron (strain ATCC 29148 / DSM 2079 / JCM 5827 / CCUG 10774 / NCTC 10582 / VPI-5482 / E50).